Here is a 390-residue protein sequence, read N- to C-terminus: MADEWFETVAIAQQRAKRRLPKSVYSSLISASEKGITVADNVAAFSELGFAPHVIGAAEKRDMSTTVMGQDISMPVLISPTGVQAVHPDGEVAVARAAAARGTAMGLSSFASKTIEDVIAANPKIFFQIYWLGGRDAIAERVERARQAGAVGLIVTTDWTFSHGRDWGSPKIPEQMNLRTILRLSPEAIVRPRWLWKFGKTLRPPDLRVPNQGRRGEPGPAFFAAYGEWMGTPPPTWDDIAWLRELWGGPFMLKGVMRVDDAKRAVDAGVSAISVSNHGGNNLDGTPASIRALPAVAAAVGDQVEVLLDGGIRRGSDVVKAVALGARAVLVGRAYLWGLAANGQAGVENVLDILRGGIDSALMGLGHSSIHDLRSDDILIPADFVRRLGR.

The 383-residue stretch at 1–383 (MADEWFETVA…RSDDILIPAD (383 aa)) folds into the FMN hydroxy acid dehydrogenase domain. The FMN site is built by serine 108, glutamine 128, threonine 156, and lysine 254. Histidine 278 functions as the Proton acceptor in the catalytic mechanism. FMN is bound by residues 309-313 (DGGIR) and 332-333 (GR).

This sequence belongs to the FMN-dependent alpha-hydroxy acid dehydrogenase family. It depends on FMN as a cofactor.

The catalysed reaction is 3-amino-5-[(4-hydroxyphenyl)methyl]-4,4-dimethyl-2-pyrrolidin-2-one + O2 + H2O = pre-mycofactocin + H2O2 + NH4(+). Its function is as follows. Involved in the biosynthesis of the enzyme cofactor mycofactocin (MFT). Catalyzes the oxidative deamination of AHDP (3-amino-5-[(4-hydroxyphenyl)methyl]-4,4-dimethyl-2-pyrrolidin-2-one), forming an alpha-keto amide moiety on the resulting molecule, which is called pre-mycofactocin (PMFT). This reaction occurs via a 5-[(4-hydroxyphenyl)methyl]-3-imino-4,4-dimethylpyrrolidin-2-one intermediate, which converts to PMFT. The alpha-keto amide moiety is the redox-active center for the redox activity of mycofactocin. The polypeptide is Pre-mycofactocin synthase (Mycobacterium ulcerans (strain Agy99)).